The sequence spans 417 residues: Neuropeptide FF receptor 2 (417 aa).

Residues 1-45 lie on the Extracellular side of the membrane; the sequence is MGKRWDSNSSGSWDHIWSGNDTQHPWYSDINITYMNYYLHQPHVT. Residues N8, N20, and N31 are each glycosylated (N-linked (GlcNAc...) asparagine). A helical membrane pass occupies residues 46–66; that stretch reads AVFISSYFLIFFLCMVGNTVV. Over 67–82 the chain is Cytoplasmic; that stretch reads CFVVIRNRYMHTVTNF. Residues 83–103 form a helical membrane-spanning segment; that stretch reads FIFNLAISDLLVGIFCMPITL. Residues 104-119 lie on the Extracellular side of the membrane; sequence LDNIIAGWPFGSSMCK. A disulfide bridge links C118 with C206. Residues 120–140 traverse the membrane as a helical segment; sequence ISGLVQGISVAASVFTLVAIA. Residues 141–160 are Cytoplasmic-facing; it reads VDRFRCVVYPFKPKLTVKTA. The helical transmembrane segment at 161–181 threads the bilayer; sequence FVMIVIIWGLAITIMTPSAIM. Residues 182-217 are Extracellular-facing; the sequence is LHVQEEKYYRVRLSSHNKTSTVYWCREDWPNQEMRR. An N-linked (GlcNAc...) asparagine glycan is attached at N198. The chain crosses the membrane as a helical span at residues 218–238; that stretch reads IYTTVLFATIYLAPLSLIVIM. Topologically, residues 239–274 are cytoplasmic; sequence YARIGASLFKTSAHSTGKQRLEQWHVSKKKQKVIKM. A helical transmembrane segment spans residues 275–295; it reads LLTVALLFILSWLPLWTLMML. The Extracellular portion of the chain corresponds to 296 to 310; that stretch reads SDYADLSPNKLRVIN. Residues 311–331 form a helical membrane-spanning segment; that stretch reads IYVYPFAHWLAFCNSSVNPII. The Cytoplasmic portion of the chain corresponds to 332–417; that stretch reads YGFFNENFRS…TGEATNSTET (86 aa). The segment at 378-417 is disordered; the sequence is HEPASQNPSGENLGCRKSADNPTQESLMEETGEATNSTET.

It belongs to the G-protein coupled receptor 1 family.

The protein resides in the cell membrane. Receptor for NPAF (A-18-F-amide) and NPFF (F-8-F-amide) neuropeptides, also known as morphine-modulating peptides. Can also be activated by a variety of naturally occurring or synthetic FMRF-amide like ligands. This receptor mediates its action by association with G proteins that activate a phosphatidylinositol-calcium second messenger system. The sequence is that of Neuropeptide FF receptor 2 (Npffr2) from Rattus norvegicus (Rat).